Reading from the N-terminus, the 35-residue chain is Photosystem II reaction center protein T (35 aa).

A helical transmembrane segment spans residues 3–23 (ALVYTFLLVSTLGIIFFAIFF).

The protein belongs to the PsbT family. As to quaternary structure, PSII is composed of 1 copy each of membrane proteins PsbA, PsbB, PsbC, PsbD, PsbE, PsbF, PsbH, PsbI, PsbJ, PsbK, PsbL, PsbM, PsbT, PsbY, PsbZ, Psb30/Ycf12, at least 3 peripheral proteins of the oxygen-evolving complex and a large number of cofactors. It forms dimeric complexes.

The protein localises to the plastid. Its subcellular location is the chloroplast thylakoid membrane. Found at the monomer-monomer interface of the photosystem II (PS II) dimer, plays a role in assembly and dimerization of PSII. PSII is a light-driven water plastoquinone oxidoreductase, using light energy to abstract electrons from H(2)O, generating a proton gradient subsequently used for ATP formation. This Ginkgo biloba (Ginkgo) protein is Photosystem II reaction center protein T.